The sequence spans 231 residues: Adenylate kinase (231 aa).

Position 12 to 17 (12 to 17 (GAGKGT)) interacts with ATP. Residues 32–61 (STGDMLRAAVKAKTPLGLEVKKIMESGGLV) form an NMP region. Residues Thr-33, Arg-38, 59-61 (GLV), 87-90 (GFPR), and Gln-94 contribute to the AMP site. The segment at 124 to 161 (GRLIHPASGRTYHRRYNPPKVADKDDVTGEPLIQRADD) is LID. Residues Arg-125 and 134–135 (TY) contribute to the ATP site. The AMP site is built by Arg-158 and Arg-169. Gly-205 serves as a coordination point for ATP.

It belongs to the adenylate kinase family. As to quaternary structure, monomer.

It localises to the cytoplasm. It carries out the reaction AMP + ATP = 2 ADP. It functions in the pathway purine metabolism; AMP biosynthesis via salvage pathway; AMP from ADP: step 1/1. In terms of biological role, catalyzes the reversible transfer of the terminal phosphate group between ATP and AMP. Plays an important role in cellular energy homeostasis and in adenine nucleotide metabolism. The sequence is that of Adenylate kinase from Coxiella burnetii (strain CbuK_Q154) (Coxiella burnetii (strain Q154)).